Here is a 190-residue protein sequence, read N- to C-terminus: Putative 3-methyladenine DNA glycosylase (190 aa).

It belongs to the DNA glycosylase MPG family.

This Deinococcus radiodurans (strain ATCC 13939 / DSM 20539 / JCM 16871 / CCUG 27074 / LMG 4051 / NBRC 15346 / NCIMB 9279 / VKM B-1422 / R1) protein is Putative 3-methyladenine DNA glycosylase.